Consider the following 215-residue polypeptide: Translation initiation factor 6 (215 aa).

It belongs to the eIF-6 family.

Binds to the 50S ribosomal subunit and prevents its association with the 30S ribosomal subunit to form the 70S initiation complex. The sequence is that of Translation initiation factor 6 from Archaeoglobus fulgidus (strain ATCC 49558 / DSM 4304 / JCM 9628 / NBRC 100126 / VC-16).